The following is a 98-amino-acid chain: NADH-ubiquinone oxidoreductase chain 4L (98 aa).

A run of 3 helical transmembrane segments spans residues 2–22, 29–49, and 61–81; these read SLVY…LLMF, SLLC…ILIL, and IIML…LVMV.

Belongs to the complex I subunit 4L family. In terms of assembly, core subunit of respiratory chain NADH dehydrogenase (Complex I) which is composed of 45 different subunits.

Its subcellular location is the mitochondrion inner membrane. The enzyme catalyses a ubiquinone + NADH + 5 H(+)(in) = a ubiquinol + NAD(+) + 4 H(+)(out). Functionally, core subunit of the mitochondrial membrane respiratory chain NADH dehydrogenase (Complex I) which catalyzes electron transfer from NADH through the respiratory chain, using ubiquinone as an electron acceptor. Part of the enzyme membrane arm which is embedded in the lipid bilayer and involved in proton translocation. This Galemys pyrenaicus (Iberian desman) protein is NADH-ubiquinone oxidoreductase chain 4L (MT-ND4L).